Reading from the N-terminus, the 72-residue chain is uncharacterized protein (72 aa).

This is an uncharacterized protein from Bacillus subtilis (strain 168).